The sequence spans 141 residues: Meiotically up-regulated gene 118 protein (141 aa).

Residues 106–115 show a composition bias toward polar residues; sequence LSSQKSARQP. Positions 106–141 are disordered; that stretch reads LSSQKSARQPTKTVASSSSSSSKSTTVSKSSSKSQV. The segment covering 116–141 has biased composition (low complexity); sequence TKTVASSSSSSSKSTTVSKSSSKSQV.

Its subcellular location is the nucleus. Its function is as follows. Has a role in meiosis. This chain is Meiotically up-regulated gene 118 protein (mug118), found in Schizosaccharomyces pombe (strain 972 / ATCC 24843) (Fission yeast).